Reading from the N-terminus, the 141-residue chain is Hemoglobin subunit alpha (141 aa).

Positions 1–141 (VLSPADKTNV…VSTVLTSKYR (141 aa)) constitute a Globin domain. At Ser3 the chain carries Phosphoserine. Lys7 bears the N6-succinyllysine mark. Position 8 is a phosphothreonine (Thr8). At Lys11 the chain carries N6-succinyllysine. An N6-acetyllysine; alternate modification is found at Lys16. Lys16 carries the N6-succinyllysine; alternate modification. Residue Tyr24 is modified to Phosphotyrosine. Phosphoserine is present on Ser35. Lys40 is subject to N6-succinyllysine. Ser49 carries the post-translational modification Phosphoserine. His58 contributes to the O2 binding site. Heme b is bound at residue His87. A Phosphoserine modification is found at Ser102. Thr108 bears the Phosphothreonine mark. Residue Ser124 is modified to Phosphoserine. A phosphothreonine mark is found at Thr134 and Thr137. The residue at position 138 (Ser138) is a Phosphoserine.

Belongs to the globin family. Heterotetramer of two alpha chains and two beta chains. In terms of tissue distribution, red blood cells.

Its function is as follows. Involved in oxygen transport from the lung to the various peripheral tissues. Hemopressin acts as an antagonist peptide of the cannabinoid receptor CNR1. Hemopressin-binding efficiently blocks cannabinoid receptor CNR1 and subsequent signaling. The sequence is that of Hemoglobin subunit alpha (HBA) from Pteronura brasiliensis (Giant otter).